A 186-amino-acid chain; its full sequence is uncharacterized protein (186 aa).

The N-terminal stretch at 1–21 (MIHVKYIILGFIMVSSLNLYA) is a signal peptide.

This is an uncharacterized protein from Rickettsia conorii (strain ATCC VR-613 / Malish 7).